Here is an 87-residue protein sequence, read N- to C-terminus: Tan_10cys (87 aa).

The signal sequence occupies residues 1–21 (MNLKVLFLLAMVLVTLCLGED). A propeptide spanning residues 22–27 (RVTDRR) is cleaved from the precursor.

Belongs to the teretoxin C (TC) superfamily. Contains 5 disulfide bonds. In terms of tissue distribution, expressed by the venom duct.

The protein localises to the secreted. The chain is Tan_10cys from Terebra anilis (Auger snail).